Consider the following 365-residue polypeptide: uncharacterized protein (365 aa).

The next 3 helical transmembrane spans lie at Thr-105–Leu-125, Ile-151–Ile-171, and Ile-187–Phe-207.

The protein localises to the cell membrane. This is an uncharacterized protein from Mycoplasma genitalium (strain ATCC 33530 / DSM 19775 / NCTC 10195 / G37) (Mycoplasmoides genitalium).